The following is a 425-amino-acid chain: Serine--tRNA ligase (425 aa).

L-serine is bound at residue 233 to 235 (TAE). Position 264–266 (264–266 (RRE)) interacts with ATP. Glutamate 287 is a binding site for L-serine. 351–354 (EISS) is a binding site for ATP. Serine 387 lines the L-serine pocket.

This sequence belongs to the class-II aminoacyl-tRNA synthetase family. Type-1 seryl-tRNA synthetase subfamily. Homodimer. The tRNA molecule binds across the dimer.

It localises to the cytoplasm. It catalyses the reaction tRNA(Ser) + L-serine + ATP = L-seryl-tRNA(Ser) + AMP + diphosphate + H(+). It carries out the reaction tRNA(Sec) + L-serine + ATP = L-seryl-tRNA(Sec) + AMP + diphosphate + H(+). The protein operates within aminoacyl-tRNA biosynthesis; selenocysteinyl-tRNA(Sec) biosynthesis; L-seryl-tRNA(Sec) from L-serine and tRNA(Sec): step 1/1. Functionally, catalyzes the attachment of serine to tRNA(Ser). Is also able to aminoacylate tRNA(Sec) with serine, to form the misacylated tRNA L-seryl-tRNA(Sec), which will be further converted into selenocysteinyl-tRNA(Sec). This is Serine--tRNA ligase from Thermotoga neapolitana (strain ATCC 49049 / DSM 4359 / NBRC 107923 / NS-E).